The primary structure comprises 91 residues: Small ribosomal subunit protein uS19 (91 aa).

This sequence belongs to the universal ribosomal protein uS19 family.

Its function is as follows. Protein S19 forms a complex with S13 that binds strongly to the 16S ribosomal RNA. This Actinobacillus pleuropneumoniae serotype 7 (strain AP76) protein is Small ribosomal subunit protein uS19.